The chain runs to 391 residues: UDP-N-acetylglucosamine--N-acetylmuramyl-(pentapeptide) pyrophosphoryl-undecaprenol N-acetylglucosamine transferase (391 aa).

Residues 11-13 (TGG), Arg-176, Ser-206, and Gln-312 contribute to the UDP-N-acetyl-alpha-D-glucosamine site.

It belongs to the glycosyltransferase 28 family. MurG subfamily.

It localises to the cell inner membrane. It carries out the reaction di-trans,octa-cis-undecaprenyl diphospho-N-acetyl-alpha-D-muramoyl-L-alanyl-D-glutamyl-meso-2,6-diaminopimeloyl-D-alanyl-D-alanine + UDP-N-acetyl-alpha-D-glucosamine = di-trans,octa-cis-undecaprenyl diphospho-[N-acetyl-alpha-D-glucosaminyl-(1-&gt;4)]-N-acetyl-alpha-D-muramoyl-L-alanyl-D-glutamyl-meso-2,6-diaminopimeloyl-D-alanyl-D-alanine + UDP + H(+). The protein operates within cell wall biogenesis; peptidoglycan biosynthesis. Its function is as follows. Cell wall formation. Catalyzes the transfer of a GlcNAc subunit on undecaprenyl-pyrophosphoryl-MurNAc-pentapeptide (lipid intermediate I) to form undecaprenyl-pyrophosphoryl-MurNAc-(pentapeptide)GlcNAc (lipid intermediate II). This chain is UDP-N-acetylglucosamine--N-acetylmuramyl-(pentapeptide) pyrophosphoryl-undecaprenol N-acetylglucosamine transferase, found in Treponema denticola (strain ATCC 35405 / DSM 14222 / CIP 103919 / JCM 8153 / KCTC 15104).